A 243-amino-acid chain; its full sequence is Exosome complex component Rrp41 (243 aa).

This sequence belongs to the RNase PH family. Rrp41 subfamily. In terms of assembly, component of the archaeal exosome complex. Forms a hexameric ring-like arrangement composed of 3 Rrp41-Rrp42 heterodimers. The hexameric ring associates with a trimer of Rrp4 and/or Csl4 subunits.

It localises to the cytoplasm. Catalytic component of the exosome, which is a complex involved in RNA degradation. Has 3'-&gt;5' exoribonuclease activity. Can also synthesize heteromeric RNA-tails. The sequence is that of Exosome complex component Rrp41 from Cenarchaeum symbiosum (strain A).